Here is a 251-residue protein sequence, read N- to C-terminus: Bidirectional sugar transporter SWEET4 (251 aa).

The Extracellular portion of the chain corresponds to 1-12 (MVNATVARNIAG). The N-linked (GlcNAc...) asparagine glycan is linked to asparagine 3. One can recognise a MtN3/slv 1 domain in the interval 12–96 (GICGNVISLF…LAIFFFFSPT (85 aa)). The helical transmembrane segment at 13 to 33 (ICGNVISLFLFLSPIPTFITI) threads the bilayer. The Cytoplasmic segment spans residues 34–45 (YKKKKVEEYKAD). A helical transmembrane segment spans residues 46 to 66 (PYLATVLNCALWVFYGLPMVQ). Topologically, residues 67-72 (PDSLLV) are extracellular. The chain crosses the membrane as a helical span at residues 73-93 (ITINGTGLAIELVYLAIFFFF). Topologically, residues 94–103 (SPTSRKVKVG) are cytoplasmic. The chain crosses the membrane as a helical span at residues 104–124 (LWLIGEMVFVGIVATCTLLLF). Residues 125-132 (HTHNQRSS) lie on the Extracellular side of the membrane. Residues 133 to 153 (FVGIFCVIFVSLMYIAPLTIM) traverse the membrane as a helical segment. Positions 133-216 (FVGIFCVIFV…LILYACYYKT (84 aa)) constitute a MtN3/slv 2 domain. Topologically, residues 154–163 (SKVIKTKSVK) are cytoplasmic. Residues 164–186 (YMPFSLSLANFLNGVVWVIYALI) traverse the membrane as a helical segment. Over 187–190 (KFDL) the chain is Extracellular. The chain crosses the membrane as a helical span at residues 191-213 (FILIGNGLGTVSGAVQLILYACY). At 214-251 (YKTTPKDDEDEEDEENLSKVNSQLQLSGNSGQAKRVSA) the chain is on the cytoplasmic side. The disordered stretch occupies residues 220 to 251 (DDEDEEDEENLSKVNSQLQLSGNSGQAKRVSA). The segment covering 231-245 (SKVNSQLQLSGNSGQ) has biased composition (polar residues).

It belongs to the SWEET sugar transporter family. As to quaternary structure, forms homooligomers and heterooligomers with SWEET8 and SWEET17.

It localises to the cell membrane. In terms of biological role, mediates both low-affinity uptake and efflux of sugar across the plasma membrane. This Arabidopsis thaliana (Mouse-ear cress) protein is Bidirectional sugar transporter SWEET4.